We begin with the raw amino-acid sequence, 256 residues long: 6-phosphogluconolactonase (256 aa).

The protein belongs to the glucosamine/galactosamine-6-phosphate isomerase family. 6-phosphogluconolactonase subfamily.

It carries out the reaction 6-phospho-D-glucono-1,5-lactone + H2O = 6-phospho-D-gluconate + H(+). Its pathway is carbohydrate degradation; pentose phosphate pathway; D-ribulose 5-phosphate from D-glucose 6-phosphate (oxidative stage): step 2/3. Functionally, hydrolysis of 6-phosphogluconolactone to 6-phosphogluconate. In Chlamydia muridarum (strain MoPn / Nigg), this protein is 6-phosphogluconolactonase (pgl).